The following is a 144-amino-acid chain: Transcription antitermination protein NusB (144 aa).

This sequence belongs to the NusB family.

Its function is as follows. Involved in transcription antitermination. Required for transcription of ribosomal RNA (rRNA) genes. Binds specifically to the boxA antiterminator sequence of the ribosomal RNA (rrn) operons. The polypeptide is Transcription antitermination protein NusB (Haemophilus influenzae (strain 86-028NP)).